The sequence spans 204 residues: Probable 5-formyltetrahydrofolate cyclo-ligase (204 aa).

An ATP-binding site is contributed by 5 to 9 (KNQLR). Residues glutamate 57, tryptophan 102, and 140-144 (HGKGY) contribute to the substrate site. ATP contacts are provided by residues 139–146 (GHGKGYYD) and aspartate 188.

The protein belongs to the 5-formyltetrahydrofolate cyclo-ligase family.

It carries out the reaction (6S)-5-formyl-5,6,7,8-tetrahydrofolate + ATP = (6R)-5,10-methenyltetrahydrofolate + ADP + phosphate. This Schizosaccharomyces pombe (strain 972 / ATCC 24843) (Fission yeast) protein is Probable 5-formyltetrahydrofolate cyclo-ligase.